Consider the following 179-residue polypeptide: Ribulose bisphosphate carboxylase small subunit, chloroplastic 3 (179 aa).

The N-terminal 58 residues, 1–58 (MASSATMLSSVATAARAAPAQASMVAPFVGLKSASAFPVTQKPATGLSTLPSNGGRVQ), are a transit peptide targeting the chloroplast.

The protein belongs to the RuBisCO small chain family. In terms of assembly, heterohexadecamer of 8 large and 8 small subunits.

Its subcellular location is the plastid. The protein resides in the chloroplast. In terms of biological role, ruBisCO catalyzes two reactions: the carboxylation of D-ribulose 1,5-bisphosphate, the primary event in carbon dioxide fixation, as well as the oxidative fragmentation of the pentose substrate. Both reactions occur simultaneously and in competition at the same active site. Although the small subunit is not catalytic it is essential for maximal activity. This is Ribulose bisphosphate carboxylase small subunit, chloroplastic 3 from Fritillaria agrestis (Stinkbells).